The chain runs to 405 residues: Tyrosine--tRNA ligase (405 aa).

Residue tyrosine 35 participates in L-tyrosine binding. A 'HIGH' region motif is present at residues 40-49; the sequence is ATSSSLHIGH. The L-tyrosine site is built by tyrosine 166 and glutamine 170. A 'KMSKS' region motif is present at residues 226–230; the sequence is KMGKS. Residue lysine 229 coordinates ATP. The 66-residue stretch at 340-405 folds into the S4 RNA-binding domain; sequence ILLVDLMLDS…GKKKFLRIVI (66 aa).

Belongs to the class-I aminoacyl-tRNA synthetase family. TyrS type 1 subfamily. In terms of assembly, homodimer.

It localises to the cytoplasm. The catalysed reaction is tRNA(Tyr) + L-tyrosine + ATP = L-tyrosyl-tRNA(Tyr) + AMP + diphosphate + H(+). Its function is as follows. Catalyzes the attachment of tyrosine to tRNA(Tyr) in a two-step reaction: tyrosine is first activated by ATP to form Tyr-AMP and then transferred to the acceptor end of tRNA(Tyr). The chain is Tyrosine--tRNA ligase from Borreliella burgdorferi (strain ATCC 35210 / DSM 4680 / CIP 102532 / B31) (Borrelia burgdorferi).